Consider the following 142-residue polypeptide: Transcriptional regulator MraZ (142 aa).

SpoVT-AbrB domains follow at residues 5 to 51 (ASSL…PRNE) and 77 to 120 (AMDV…DAAT).

This sequence belongs to the MraZ family. As to quaternary structure, forms oligomers.

Its subcellular location is the cytoplasm. It is found in the nucleoid. This is Transcriptional regulator MraZ from Polaromonas sp. (strain JS666 / ATCC BAA-500).